Reading from the N-terminus, the 101-residue chain is MILMFRMNKGMSFITLLFSLALFSVLFLVFNQWTASQRKSTVKTYQDFQAIQVAENQAQRQFLGLACEQLIQQNGLTFRIQCENERIIVRYPTSEILIKTQ.

Positions 1 to 24 (MILMFRMNKGMSFITLLFSLALFS) are cleaved as a signal peptide.

This is an uncharacterized protein from Haemophilus influenzae (strain ATCC 51907 / DSM 11121 / KW20 / Rd).